Consider the following 254-residue polypeptide: Peptide methionine sulfoxide reductase A5 (254 aa).

The signal sequence occupies residues 1-33 (MAISLKRNRFFIPYTNLVFFFFLCVSLLDKTVS).

It belongs to the MsrA Met sulfoxide reductase family.

It catalyses the reaction L-methionyl-[protein] + [thioredoxin]-disulfide + H2O = L-methionyl-(S)-S-oxide-[protein] + [thioredoxin]-dithiol. The catalysed reaction is [thioredoxin]-disulfide + L-methionine + H2O = L-methionine (S)-S-oxide + [thioredoxin]-dithiol. Its function is as follows. Catalyzes the reduction of methionine sulfoxide (MetSO) to methionine in proteins. Plays a protective role against oxidative stress by restoring activity to proteins that have been inactivated by methionine oxidation. MSRA family specifically reduces the MetSO S-enantiomer. This is Peptide methionine sulfoxide reductase A5 (MSRA5) from Arabidopsis thaliana (Mouse-ear cress).